Reading from the N-terminus, the 468-residue chain is Neurexin-1-beta (468 aa).

The signal sequence occupies residues 1-46 (MYQRMLRCGAELGSPGGGSSGGAGGRLALLWIVPLTLSGLLGVAWG). Residues 47-391 (ASSLGAHHIH…AEVIRESSST (345 aa)) are Extracellular-facing. In terms of domain architecture, Laminin G-like spans 87–285 (YIFSKGGGQI…DANIAIVGNV (199 aa)). Positions 137 and 154 each coordinate Ca(2+). Residue asparagine 184 is glycosylated (N-linked (GlcNAc...) asparagine). The interval 201–230 (GNNDNERLAIARQRIPYRLGRVVDEWLLDK) is essential for interaction with CBLN1; modulates interaction affinity with NLGN1, NLGN2 and NLGN3; prevents interaction with DAG1/alpha-dystroglycan; modulates interaction with alpha-latrotoxin. Positions 236 and 238 each coordinate Ca(2+). O-linked (Xyl...) (heparan sulfate) serine glycosylation occurs at serine 346. Positions 350-381 (PSDDEDIDPCEPSSGGLANPTRVGGREPYPGS) are disordered. Residues 392–414 (TGMVVGIVAAAALCILILLYAMY) form a helical membrane-spanning segment. The Cytoplasmic segment spans residues 415 to 468 (KYRNRDEGSYHVDESRNYISNSAQSNGAVVKEKQPSSAKSANKNKKNKDKEYYV). The disordered stretch occupies residues 435–468 (NSAQSNGAVVKEKQPSSAKSANKNKKNKDKEYYV). Phosphoserine is present on residues serine 450, serine 451, and serine 454.

This sequence belongs to the neurexin family. In terms of assembly, the cytoplasmic C-terminal region binds to CASK. Binds NLGN1, NLGN2 and NLGN3, DAG1 (alpha-dystroglycan) and alpha-latrotoxin. Binding to neuroligins is calcium-dependent, and the binding preference ranks as follow: NLGN1 &gt; NLGN4 &gt;&gt; NLGN3 &gt; NLGN2. Interacts with CBLN2 and more weakly with CBLN4. Interacts with CBLN1; interaction is CBLN1 hexamer form-dependent; CBLN1-binding is calcium-independent; isoform 1b does not interact with CBLN1. Interacts with CLSTN3. N-glycosylated. Post-translationally, O-glycosylated; contains heparan sulfate. Heparan sulfate attachment is required for synapse development by mediating interactions with neuroligins. In terms of tissue distribution, brain.

The protein resides in the presynaptic cell membrane. Functionally, neuronal cell surface protein involved in cell recognition and cell adhesion by forming intracellular junctions through binding to neuroligins. Plays a role in formation of synaptic junctions. Functions as part of a trans-synaptic complex by binding to cerebellins and postsynaptic GRID1. This interaction helps regulate the activity of NMDA and AMPA receptors at hippocampal synapses without affecting synapse formation. NRXN1B-CBLN2-GRID1 complex transduce presynaptic signals into postsynaptic NMDAR response. The chain is Neurexin-1-beta from Rattus norvegicus (Rat).